The sequence spans 310 residues: Probable manganese-dependent inorganic pyrophosphatase (310 aa).

Positions 9, 13, 15, 76, 98, and 150 each coordinate Mn(2+).

The protein belongs to the PPase class C family. Mn(2+) is required as a cofactor.

It localises to the cytoplasm. It carries out the reaction diphosphate + H2O = 2 phosphate + H(+). The protein is Probable manganese-dependent inorganic pyrophosphatase of Streptococcus thermophilus (strain ATCC BAA-491 / LMD-9).